The following is a 461-amino-acid chain: Tubulin gamma-2 chain (461 aa).

142-148 (AGGTGSG) provides a ligand contact to GTP.

Belongs to the tubulin family.

The protein localises to the cytoplasm. It localises to the cytoskeleton. It is found in the microtubule organizing center. Its subcellular location is the centrosome. Its function is as follows. Tubulin is the major constituent of microtubules. The gamma chain is found at microtubule organizing centers (MTOC) such as the spindle poles or the centrosome, suggesting that it is involved in the minus-end nucleation of microtubule assembly. This Euplotoides octocarinatus (Freshwater ciliate) protein is Tubulin gamma-2 chain.